Reading from the N-terminus, the 1071-residue chain is Intracellular phospholipase A2 (1071 aa).

The disordered stretch occupies residues 1–22 (MTTTNKDGPFRQQYLPGVHKEP). ANK repeat units follow at residues 411–440 (ENCY…TLFC), 479–508 (DGQS…KFTR), 510–539 (DRNE…EIAN), 544–570 (LGNS…ELGL), 578–610 (AGET…NMNA), 614–651 (HGNT…KINL), and 652–681 (RGES…TRCP). The 174-residue stretch at 748–921 (ISMDGGGIRG…ISNNPALDLM (174 aa)) folds into the PNPLA domain. Positions 752–757 (GGGIRG) match the GXGXXG motif. Positions 784–788 (GTSTG) match the GXSXG motif. Serine 786 functions as the Nucleophile in the catalytic mechanism. Catalysis depends on aspartate 908, which acts as the Proton acceptor. A DGA/G motif is present at residues 908–910 (DGG).

It belongs to the patatin family.

It catalyses the reaction a 1,2-diacyl-sn-glycero-3-phosphocholine + H2O = a 1-acyl-sn-glycero-3-phosphocholine + a fatty acid + H(+). Functionally, phospholipase that plays a critical role during oogenesis, ovulation, and/or embryogenesis. This chain is Intracellular phospholipase A2, found in Caenorhabditis elegans.